The sequence spans 429 residues: Histidine--tRNA ligase (429 aa).

The protein belongs to the class-II aminoacyl-tRNA synthetase family. As to quaternary structure, homodimer.

It is found in the cytoplasm. The catalysed reaction is tRNA(His) + L-histidine + ATP = L-histidyl-tRNA(His) + AMP + diphosphate + H(+). This is Histidine--tRNA ligase from Chlorobium phaeobacteroides (strain DSM 266 / SMG 266 / 2430).